A 105-amino-acid polypeptide reads, in one-letter code: Large ribosomal subunit protein uL24 (105 aa).

This sequence belongs to the universal ribosomal protein uL24 family. Part of the 50S ribosomal subunit.

Its function is as follows. One of two assembly initiator proteins, it binds directly to the 5'-end of the 23S rRNA, where it nucleates assembly of the 50S subunit. Functionally, one of the proteins that surrounds the polypeptide exit tunnel on the outside of the subunit. The chain is Large ribosomal subunit protein uL24 from Thermotoga petrophila (strain ATCC BAA-488 / DSM 13995 / JCM 10881 / RKU-1).